A 330-amino-acid chain; its full sequence is Probable cytosolic iron-sulfur protein assembly protein ciao1-A (330 aa).

WD repeat units lie at residues 14–53 (HPDSRCWYVAWNPKGTLLASCGGDRAIRIWGREGDSWECK), 59–98 (GHQRAVRKVAWSPCGNYLASASFDATTCIWKKKNDDFECL), 103–142 (GHENEVKCVAWAPSGNQLATCSRDKSVWIWEVDEEDEYEC), 148–187 (SHTQDVKHVVWHPTQELLASCSYDNNVCVYKEEDDDWECR), 192–231 (GHTSTVWGLTFDPSGQRLASCSDDRTVKIWKECQPGGGQD), 243–282 (FHGRTVYDIAWCPLTGALATACGDDGVRVFKEDETADPDQ), and 294–330 (AHSQDVNCIAWHPKEAGLLVSCSDNGEIAVWNYQSEV).

Belongs to the WD repeat CIA1 family. Component of the CIA complex.

Functionally, key component of the cytosolic iron-sulfur protein assembly (CIA) complex, a multiprotein complex that mediates the incorporation of iron-sulfur cluster into extramitochondrial Fe/S proteins. This Salmo salar (Atlantic salmon) protein is Probable cytosolic iron-sulfur protein assembly protein ciao1-A (ciao1a).